A 201-amino-acid chain; its full sequence is 3-isopropylmalate dehydratase small subunit (201 aa).

The protein belongs to the LeuD family. LeuD type 1 subfamily. Heterodimer of LeuC and LeuD.

The enzyme catalyses (2R,3S)-3-isopropylmalate = (2S)-2-isopropylmalate. It functions in the pathway amino-acid biosynthesis; L-leucine biosynthesis; L-leucine from 3-methyl-2-oxobutanoate: step 2/4. In terms of biological role, catalyzes the isomerization between 2-isopropylmalate and 3-isopropylmalate, via the formation of 2-isopropylmaleate. This is 3-isopropylmalate dehydratase small subunit from Klebsiella pneumoniae (strain 342).